A 527-amino-acid polypeptide reads, in one-letter code: Bifunctional purine biosynthesis protein PurH (527 aa).

The MGS-like domain occupies 1-149 (MASDFLPVRR…KNFARVAVAT (149 aa)).

Belongs to the PurH family.

The catalysed reaction is (6R)-10-formyltetrahydrofolate + 5-amino-1-(5-phospho-beta-D-ribosyl)imidazole-4-carboxamide = 5-formamido-1-(5-phospho-D-ribosyl)imidazole-4-carboxamide + (6S)-5,6,7,8-tetrahydrofolate. The enzyme catalyses IMP + H2O = 5-formamido-1-(5-phospho-D-ribosyl)imidazole-4-carboxamide. The protein operates within purine metabolism; IMP biosynthesis via de novo pathway; 5-formamido-1-(5-phospho-D-ribosyl)imidazole-4-carboxamide from 5-amino-1-(5-phospho-D-ribosyl)imidazole-4-carboxamide (10-formyl THF route): step 1/1. Its pathway is purine metabolism; IMP biosynthesis via de novo pathway; IMP from 5-formamido-1-(5-phospho-D-ribosyl)imidazole-4-carboxamide: step 1/1. The polypeptide is Bifunctional purine biosynthesis protein PurH (Xanthomonas euvesicatoria pv. vesicatoria (strain 85-10) (Xanthomonas campestris pv. vesicatoria)).